The primary structure comprises 262 residues: Thiazole synthase (262 aa).

Lys96 functions as the Schiff-base intermediate with DXP in the catalytic mechanism. 1-deoxy-D-xylulose 5-phosphate is bound by residues Gly157, Ala184–Gly185, and Asn206–Thr207.

Belongs to the ThiG family. In terms of assembly, homotetramer. Forms heterodimers with either ThiH or ThiS.

The protein resides in the cytoplasm. The enzyme catalyses [ThiS sulfur-carrier protein]-C-terminal-Gly-aminoethanethioate + 2-iminoacetate + 1-deoxy-D-xylulose 5-phosphate = [ThiS sulfur-carrier protein]-C-terminal Gly-Gly + 2-[(2R,5Z)-2-carboxy-4-methylthiazol-5(2H)-ylidene]ethyl phosphate + 2 H2O + H(+). Its pathway is cofactor biosynthesis; thiamine diphosphate biosynthesis. In terms of biological role, catalyzes the rearrangement of 1-deoxy-D-xylulose 5-phosphate (DXP) to produce the thiazole phosphate moiety of thiamine. Sulfur is provided by the thiocarboxylate moiety of the carrier protein ThiS. In vitro, sulfur can be provided by H(2)S. This chain is Thiazole synthase, found in Legionella pneumophila (strain Corby).